A 169-amino-acid polypeptide reads, in one-letter code: Der GTPase-activating protein YihI (169 aa).

2 disordered regions span residues 1–92 (MKPS…EKPM) and 146–169 (SYDD…LRGN). The span at 10 to 19 (SKGHAKARRK) shows a compositional bias: basic residues. Over residues 20–30 (TREELDQEARD) the composition is skewed to basic and acidic residues. The segment covering 31 to 40 (RKRQKKRRGH) has biased composition (basic residues). Polar residues predominate over residues 49-58 (GNTTSGSKGQ). Residues 147-159 (YDDDEEEEEDEKQ) show a composition bias toward acidic residues. Over residues 160–169 (EDMMRLLRGN) the composition is skewed to basic and acidic residues.

Belongs to the YihI family. Interacts with Der.

Functionally, a GTPase-activating protein (GAP) that modifies Der/EngA GTPase function. May play a role in ribosome biogenesis. The sequence is that of Der GTPase-activating protein YihI from Escherichia coli O1:K1 / APEC.